The following is a 475-amino-acid chain: Aspartyl/glutamyl-tRNA(Asn/Gln) amidotransferase subunit B (475 aa).

The protein belongs to the GatB/GatE family. GatB subfamily. Heterotrimer of A, B and C subunits.

It carries out the reaction L-glutamyl-tRNA(Gln) + L-glutamine + ATP + H2O = L-glutaminyl-tRNA(Gln) + L-glutamate + ADP + phosphate + H(+). The enzyme catalyses L-aspartyl-tRNA(Asn) + L-glutamine + ATP + H2O = L-asparaginyl-tRNA(Asn) + L-glutamate + ADP + phosphate + 2 H(+). Allows the formation of correctly charged Asn-tRNA(Asn) or Gln-tRNA(Gln) through the transamidation of misacylated Asp-tRNA(Asn) or Glu-tRNA(Gln) in organisms which lack either or both of asparaginyl-tRNA or glutaminyl-tRNA synthetases. The reaction takes place in the presence of glutamine and ATP through an activated phospho-Asp-tRNA(Asn) or phospho-Glu-tRNA(Gln). This is Aspartyl/glutamyl-tRNA(Asn/Gln) amidotransferase subunit B from Staphylococcus haemolyticus (strain JCSC1435).